The chain runs to 318 residues: 2-keto-3-deoxygluconate permease (318 aa).

Transmembrane regions (helical) follow at residues 10–30, 42–62, 76–96, 105–125, 139–159, 162–182, 199–219, 224–244, 254–274, and 289–309; these read IPGG…TFTP, GLIT…GASI, VLVV…GAFL, LLAG…NGGL, AGAF…VILG, GIAT…LIGF, VQTL…LSVI, FAGI…LILA, TAGI…LLIA, and ALVA…TALW.

This sequence belongs to the KdgT transporter family.

The protein resides in the cell inner membrane. The catalysed reaction is 2-dehydro-3-deoxy-D-gluconate(in) + H(+)(in) = 2-dehydro-3-deoxy-D-gluconate(out) + H(+)(out). Catalyzes the proton-dependent uptake of 2-keto-3-deoxygluconate (KDG) into the cell. This is 2-keto-3-deoxygluconate permease from Pectobacterium atrosepticum (strain SCRI 1043 / ATCC BAA-672) (Erwinia carotovora subsp. atroseptica).